Reading from the N-terminus, the 131-residue chain is MVAAKKHVPIVKKRSKGFMRHQSDRFMRVDSAWRKPKGIDNRVRRRFRGTLAMPSIGYGSNKKTRHMMPSGHKAFLVSNVKDVELLLMHNKTYAAEIAHNVSSRKRIEIIARAKQLSVKVTNAKAKVTTEV.

Belongs to the eukaryotic ribosomal protein eL32 family. As to quaternary structure, component of the large ribosomal subunit (LSU). Mature N.crassa ribosomes consist of a small (40S) and a large (60S) subunit. The 40S small subunit contains 1 molecule of ribosomal RNA (18S rRNA) and at least 32 different proteins. The large 60S subunit contains 3 rRNA molecules (26S, 5.8S and 5S rRNA) and at least 42 different proteins.

The protein resides in the cytoplasm. Functionally, component of the ribosome, a large ribonucleoprotein complex responsible for the synthesis of proteins in the cell. The small ribosomal subunit (SSU) binds messenger RNAs (mRNAs) and translates the encoded message by selecting cognate aminoacyl-transfer RNA (tRNA) molecules. The large subunit (LSU) contains the ribosomal catalytic site termed the peptidyl transferase center (PTC), which catalyzes the formation of peptide bonds, thereby polymerizing the amino acids delivered by tRNAs into a polypeptide chain. The nascent polypeptides leave the ribosome through a tunnel in the LSU and interact with protein factors that function in enzymatic processing, targeting, and the membrane insertion of nascent chains at the exit of the ribosomal tunnel. In Neurospora crassa (strain ATCC 24698 / 74-OR23-1A / CBS 708.71 / DSM 1257 / FGSC 987), this protein is Large ribosomal subunit protein eL32 (crp-63).